We begin with the raw amino-acid sequence, 217 residues long: Guanylate kinase (217 aa).

Residues Gly10–Thr190 form the Guanylate kinase-like domain. Ser17–Ser24 provides a ligand contact to ATP.

It belongs to the guanylate kinase family.

Its subcellular location is the cytoplasm. The catalysed reaction is GMP + ATP = GDP + ADP. Its function is as follows. Essential for recycling GMP and indirectly, cGMP. In Ruegeria sp. (strain TM1040) (Silicibacter sp.), this protein is Guanylate kinase.